A 320-amino-acid polypeptide reads, in one-letter code: Ribose-phosphate pyrophosphokinase (320 aa).

41 to 43 serves as a coordination point for ATP; sequence NDN. Histidine 134 and aspartate 175 together coordinate Mg(2+). The active site involves lysine 198. D-ribose 5-phosphate-binding residues include arginine 200 and aspartate 224.

This sequence belongs to the ribose-phosphate pyrophosphokinase family. Class I subfamily. As to quaternary structure, homohexamer. Requires Mg(2+) as cofactor.

It localises to the cytoplasm. The catalysed reaction is D-ribose 5-phosphate + ATP = 5-phospho-alpha-D-ribose 1-diphosphate + AMP + H(+). Its pathway is metabolic intermediate biosynthesis; 5-phospho-alpha-D-ribose 1-diphosphate biosynthesis; 5-phospho-alpha-D-ribose 1-diphosphate from D-ribose 5-phosphate (route I): step 1/1. Involved in the biosynthesis of the central metabolite phospho-alpha-D-ribosyl-1-pyrophosphate (PRPP) via the transfer of pyrophosphoryl group from ATP to 1-hydroxyl of ribose-5-phosphate (Rib-5-P). The sequence is that of Ribose-phosphate pyrophosphokinase from Deinococcus radiodurans (strain ATCC 13939 / DSM 20539 / JCM 16871 / CCUG 27074 / LMG 4051 / NBRC 15346 / NCIMB 9279 / VKM B-1422 / R1).